Reading from the N-terminus, the 185-residue chain is uncharacterized protein (185 aa).

Transmembrane regions (helical) follow at residues 5–25 (SFLI…RIWL), 63–83 (LATV…LILI), 97–117 (FLGL…VLLI), and 149–169 (IIPA…GLQF).

The protein belongs to the YggT family.

Its subcellular location is the cell membrane. This is an uncharacterized protein from Vibrio alginolyticus.